Consider the following 170-residue polypeptide: Protein HemX (170 aa).

Polar residues predominate over residues 1–17 (MTEQKNTNENDLQNGTS). A disordered region spans residues 1 to 24 (MTEQKNTNENDLQNGTSKADDDIR). A helical transmembrane segment spans residues 37 to 57 (GLIGSAVAILVILAIGGGLYY).

The protein localises to the cell membrane. The sequence is that of Protein HemX from Proteus mirabilis.